A 134-amino-acid polypeptide reads, in one-letter code: Phosphoribosyl-AMP cyclohydrolase (134 aa).

D90 is a Mg(2+) binding site. Residue C91 participates in Zn(2+) binding. Mg(2+) is bound by residues D92 and D94. Residues C107 and C114 each coordinate Zn(2+).

The protein belongs to the PRA-CH family. Homodimer. Mg(2+) serves as cofactor. The cofactor is Zn(2+).

Its subcellular location is the cytoplasm. It carries out the reaction 1-(5-phospho-beta-D-ribosyl)-5'-AMP + H2O = 1-(5-phospho-beta-D-ribosyl)-5-[(5-phospho-beta-D-ribosylamino)methylideneamino]imidazole-4-carboxamide. It participates in amino-acid biosynthesis; L-histidine biosynthesis; L-histidine from 5-phospho-alpha-D-ribose 1-diphosphate: step 3/9. In terms of biological role, catalyzes the hydrolysis of the adenine ring of phosphoribosyl-AMP. This Arthrobacter sp. (strain FB24) protein is Phosphoribosyl-AMP cyclohydrolase.